The sequence spans 246 residues: 3-deoxy-manno-octulosonate cytidylyltransferase (246 aa).

This sequence belongs to the KdsB family.

It localises to the cytoplasm. The catalysed reaction is 3-deoxy-alpha-D-manno-oct-2-ulosonate + CTP = CMP-3-deoxy-beta-D-manno-octulosonate + diphosphate. It functions in the pathway nucleotide-sugar biosynthesis; CMP-3-deoxy-D-manno-octulosonate biosynthesis; CMP-3-deoxy-D-manno-octulosonate from 3-deoxy-D-manno-octulosonate and CTP: step 1/1. The protein operates within bacterial outer membrane biogenesis; lipopolysaccharide biosynthesis. Its function is as follows. Activates KDO (a required 8-carbon sugar) for incorporation into bacterial lipopolysaccharide in Gram-negative bacteria. This is 3-deoxy-manno-octulosonate cytidylyltransferase from Bradyrhizobium diazoefficiens (strain JCM 10833 / BCRC 13528 / IAM 13628 / NBRC 14792 / USDA 110).